Here is a 107-residue protein sequence, read N- to C-terminus: Late histone H2B.L4 (107 aa).

S94 carries O-linked (GlcNAc) serine glycosylation. K102 participates in a covalent cross-link: Glycyl lysine isopeptide (Lys-Gly) (interchain with G-Cter in ubiquitin).

Belongs to the histone H2B family. As to quaternary structure, the nucleosome is a histone octamer containing two molecules each of H2A, H2B, H3 and H4 assembled in one H3-H4 heterotetramer and two H2A-H2B heterodimers. The octamer wraps approximately 147 bp of DNA. Monoubiquitination gives a specific tag for epigenetic transcriptional activation and is also prerequisite for histone H3 'Lys-4' and 'Lys-79' methylation. Post-translationally, glcNAcylation at Ser-94 promotes monoubiquitination of Lys-102. It fluctuates in response to extracellular glucose, and associates with transcribed genes.

Its subcellular location is the nucleus. It localises to the chromosome. Functionally, core component of nucleosome. Nucleosomes wrap and compact DNA into chromatin, limiting DNA accessibility to the cellular machineries which require DNA as a template. Histones thereby play a central role in transcription regulation, DNA repair, DNA replication and chromosomal stability. DNA accessibility is regulated via a complex set of post-translational modifications of histones, also called histone code, and nucleosome remodeling. This is Late histone H2B.L4 from Strongylocentrotus purpuratus (Purple sea urchin).